A 186-amino-acid chain; its full sequence is Threonylcarbamoyl-AMP synthase (186 aa).

The 186-residue stretch at 1 to 186 (MADTWEAAHS…LNNQVFRDDA (186 aa)) folds into the YrdC-like domain.

It belongs to the SUA5 family. TsaC subfamily.

The protein resides in the cytoplasm. The catalysed reaction is L-threonine + hydrogencarbonate + ATP = L-threonylcarbamoyladenylate + diphosphate + H2O. Its function is as follows. Required for the formation of a threonylcarbamoyl group on adenosine at position 37 (t(6)A37) in tRNAs that read codons beginning with adenine. Catalyzes the conversion of L-threonine, HCO(3)(-)/CO(2) and ATP to give threonylcarbamoyl-AMP (TC-AMP) as the acyladenylate intermediate, with the release of diphosphate. The polypeptide is Threonylcarbamoyl-AMP synthase (Idiomarina loihiensis (strain ATCC BAA-735 / DSM 15497 / L2-TR)).